We begin with the raw amino-acid sequence, 59 residues long: Anti-inflammatory peptide amregulin (59 aa).

A signal peptide spans 1-19 (MKLHMLNMLNCLLLTVCDG).

Salivary glands.

It is found in the secreted. Its function is as follows. Anti-inflammatory peptide that may facilitate successful blood feeding of ticks and may lead to immunotolerance in its host. Inhibits the secretion of inflammatory factors in rat splenocytes, such as tumor necrosis factor-alpha (TNF), interleukin-1, interleukin-8 (CXCL8) and interferon-gamma (IFNG). In addition, shows strong free radical scavenging and antioxidant activities in vitro. In vivo, inhibits adjuvant-induced paw inflammation in mouse models. This is Anti-inflammatory peptide amregulin from Amblyomma variegatum (Tropical bont tick).